The primary structure comprises 154 residues: Probable chemoreceptor glutamine deamidase CheD (154 aa).

The protein belongs to the CheD family.

It catalyses the reaction L-glutaminyl-[protein] + H2O = L-glutamyl-[protein] + NH4(+). In terms of biological role, probably deamidates glutamine residues to glutamate on methyl-accepting chemotaxis receptors (MCPs), playing an important role in chemotaxis. This is Probable chemoreceptor glutamine deamidase CheD from Methanococcus maripaludis (strain C6 / ATCC BAA-1332).